Here is a 136-residue protein sequence, read N- to C-terminus: Ribosome-binding factor A (136 aa).

Belongs to the RbfA family. In terms of assembly, monomer. Binds 30S ribosomal subunits, but not 50S ribosomal subunits or 70S ribosomes.

The protein localises to the cytoplasm. Its function is as follows. One of several proteins that assist in the late maturation steps of the functional core of the 30S ribosomal subunit. Associates with free 30S ribosomal subunits (but not with 30S subunits that are part of 70S ribosomes or polysomes). Required for efficient processing of 16S rRNA. May interact with the 5'-terminal helix region of 16S rRNA. This chain is Ribosome-binding factor A, found in Rhizobium etli (strain ATCC 51251 / DSM 11541 / JCM 21823 / NBRC 15573 / CFN 42).